A 50-amino-acid polypeptide reads, in one-letter code: Large ribosomal subunit protein bL33B (50 aa).

This sequence belongs to the bacterial ribosomal protein bL33 family.

This is Large ribosomal subunit protein bL33B from Mesomycoplasma hyopneumoniae (strain 7448) (Mycoplasma hyopneumoniae).